The following is a 262-amino-acid chain: Malonyl-[acyl-carrier protein] O-methyltransferase (262 aa).

The protein belongs to the methyltransferase superfamily.

The catalysed reaction is malonyl-[ACP] + S-adenosyl-L-methionine = malonyl-[ACP] methyl ester + S-adenosyl-L-homocysteine. Its pathway is cofactor biosynthesis; biotin biosynthesis. Converts the free carboxyl group of a malonyl-thioester to its methyl ester by transfer of a methyl group from S-adenosyl-L-methionine (SAM). It allows to synthesize pimeloyl-ACP via the fatty acid synthetic pathway. The protein is Malonyl-[acyl-carrier protein] O-methyltransferase of Erwinia pyrifoliae (strain DSM 12163 / CIP 106111 / Ep16/96).